We begin with the raw amino-acid sequence, 308 residues long: Coenzyme PQQ synthesis protein B (308 aa).

It belongs to the PqqB family.

It functions in the pathway cofactor biosynthesis; pyrroloquinoline quinone biosynthesis. Functionally, may be involved in the transport of PQQ or its precursor to the periplasm. The sequence is that of Coenzyme PQQ synthesis protein B from Rhodopseudomonas palustris (strain TIE-1).